The primary structure comprises 175 residues: B9 domain-containing protein 2 (175 aa).

A C2 B9-type domain is found at 2–118 (AEVHVIGQII…ACPTWRPLGS (117 aa)).

Belongs to the B9D family. In terms of assembly, part of the tectonic-like complex (also named B9 complex). Interacts with TUBG1.

It is found in the cytoplasm. The protein localises to the cytoskeleton. The protein resides in the cilium basal body. Its subcellular location is the cilium axoneme. It localises to the nucleus. Component of the tectonic-like complex, a complex localized at the transition zone of primary cilia and acting as a barrier that prevents diffusion of transmembrane proteins between the cilia and plasma membranes. The protein is B9 domain-containing protein 2 (B9D2) of Homo sapiens (Human).